We begin with the raw amino-acid sequence, 999 residues long: Signal peptide, CUB and EGF-like domain-containing protein 2 (999 aa).

An N-terminal signal peptide occupies residues 1–31 (MGVAGRNRPGAAWAVLLLLLLLPPLLLLAGA). In terms of domain architecture, EGF-like 1; calcium-binding spans 45–85 (DVDECAQGLDDCHADALCQNTPTSYKCSCKPGYQGEGRQCE). 6 disulfide bridges follow: Cys-49/Cys-62, Cys-56/Cys-71, Cys-73/Cys-84, Cys-90/Cys-102, Cys-98/Cys-111, and Cys-113/Cys-126. The 42-residue stretch at 86–127 (DIDECGNELNGGCVHDCLNIPGNYRCTCFDGFMLAHDGHNCL) folds into the EGF-like 2; calcium-binding domain. Residues 128 to 168 (DVDECLENNGGCQHTCVNVMGSYECCCKEGFFLSDNQHTCI) enclose the EGF-like 3; calcium-binding domain. EGF-like domains lie at 177-213 (CMNK…QRDC), 217-252 (CNHG…GRSC), and 286-321 (CAVN…GKTC). The EGF-like 7; calcium-binding domain occupies 323–363 (DIDECQTRNGGCDHFCKNIVGSFDCGCKKGFKLLTDEKSCQ). Residues 364–402 (DVDECSLDRTCDHSCINHPGTFACACNRGYTLYGFTHCG) form the EGF-like 8; calcium-binding domain. 6 cysteine pairs are disulfide-bonded: Cys-368–Cys-378, Cys-374–Cys-387, Cys-389–Cys-401, Cys-407–Cys-418, Cys-414–Cys-427, and Cys-429–Cys-442. One can recognise an EGF-like 9; calcium-binding domain in the interval 403–443 (DTNECSINNGGCQQVCVNTVGSYECQCHPGYKLHWNKKDCV). The N-linked (GlcNAc...) asparagine glycan is linked to Asn-659. A disulfide bond links Cys-809 and Cys-835. The 113-residue stretch at 809-921 (CGGELGDFTG…RGFQVPYVTY (113 aa)) folds into the CUB domain. Residues 847-856 (ILIVVPEIFL) form an interaction with the cholesterol-anchor of SHH region. Cys-862 and Cys-883 form a disulfide bridge.

Forms homooligomers. Forms heterooligomers with SCUBE1. Forms heterooligomers with SCUBE3. Interacts with SHH via the cholesterol anchor of the dually lipid-modified SHH (ShhNp). Interacts with PTCH1. Interacts with VEGFR2. In terms of processing, N-glycosylated. In terms of tissue distribution, expressed in a broad spectrum of adult tissues.

The protein resides in the secreted. Its subcellular location is the cell surface. Its function is as follows. Lipid-binding protein required for SHH long-range signaling by binding to the dually lipid-modified SHH (ShhNp) and by promoting ShhNp mobilization, solubilization and release from the cell membrane. Acts by enhancing the proteolytic processing (shedding) of the lipid-modified N- and C- terminal of ShhNp at the cell surface. Synergizes with DISP1 to increase SHH secretion. Probable cell surface coreceptor for VEGFR2 involved in VEGFR2-mediated angiogenesis. This is Signal peptide, CUB and EGF-like domain-containing protein 2 from Homo sapiens (Human).